The primary structure comprises 421 residues: MFTANMNIQDYDPILWQAIENENRRQEEHIELIASENYASPRVMQAQGSQFTNKYAEGYPGKRYYGGCEYADIVEQLAIDRAKQLFGADYVNVQPHSGSQANAAVYGALIQPNDTILGMDLAHGGHLTHGAKVSFSGKIYNSVLYGITAEGLIDYEDVRQKALECKPKMIVAGFSAYSQIVDWAKMREIADEVGAYLFVDMAHVAGLIAAGVYPSPLPYAHVVTTTTHKTLGGPRGGLILSACGDEEIYKKLQSSVFPANQGGPLVHIIAAKAVCFKEALEPEYKIYQQNVVKNAKAMVEVFKQRGYEVISNGTENHLFLVSFVKQGLTGKAADAALGQANITVNKNSVPNDPQKPFITSGIRIGTPAVTRRGFKEADVQALAGWMCDVLDSIGKDNHEQVIAETKAKVLDICARLPVYAK.

(6S)-5,6,7,8-tetrahydrofolate contacts are provided by residues Leu121 and 125–127 (GHL). Lys229 is subject to N6-(pyridoxal phosphate)lysine.

The protein belongs to the SHMT family. In terms of assembly, homodimer. Pyridoxal 5'-phosphate serves as cofactor.

It is found in the cytoplasm. It carries out the reaction (6R)-5,10-methylene-5,6,7,8-tetrahydrofolate + glycine + H2O = (6S)-5,6,7,8-tetrahydrofolate + L-serine. The protein operates within one-carbon metabolism; tetrahydrofolate interconversion. It functions in the pathway amino-acid biosynthesis; glycine biosynthesis; glycine from L-serine: step 1/1. Catalyzes the reversible interconversion of serine and glycine with tetrahydrofolate (THF) serving as the one-carbon carrier. This reaction serves as the major source of one-carbon groups required for the biosynthesis of purines, thymidylate, methionine, and other important biomolecules. Also exhibits THF-independent aldolase activity toward beta-hydroxyamino acids, producing glycine and aldehydes, via a retro-aldol mechanism. This is Serine hydroxymethyltransferase from Actinobacillus pleuropneumoniae serotype 7 (strain AP76).